Consider the following 299-residue polypeptide: Tyrosine recombinase XerC (299 aa).

The 85-residue stretch at M1–N85 folds into the Core-binding (CB) domain. The region spanning R106 to D285 is the Tyr recombinase domain. Residues R146, K170, H237, R240, and H263 contribute to the active site. Y272 serves as the catalytic O-(3'-phospho-DNA)-tyrosine intermediate.

This sequence belongs to the 'phage' integrase family. XerC subfamily. Forms a cyclic heterotetrameric complex composed of two molecules of XerC and two molecules of XerD.

The protein resides in the cytoplasm. Functionally, site-specific tyrosine recombinase, which acts by catalyzing the cutting and rejoining of the recombining DNA molecules. The XerC-XerD complex is essential to convert dimers of the bacterial chromosome into monomers to permit their segregation at cell division. It also contributes to the segregational stability of plasmids. The chain is Tyrosine recombinase XerC from Pseudomonas fluorescens (strain Pf0-1).